The primary structure comprises 667 residues: Transmembrane 9 superfamily member 1 (667 aa).

Positions 1 to 22 are cleaved as a signal peptide; it reads MIYKMAHVQLLLLYFFVSTVKA. Over 23–302 the chain is Lumenal; sequence FYLPGVAPTT…DKYLHVYDPS (280 aa). Asn61 and Asn282 each carry an N-linked (GlcNAc...) asparagine glycan. A helical transmembrane segment spans residues 303 to 323; that stretch reads IQWFSLINFSLVVVLLSSVVI. Over 324 to 370 the chain is Cytoplasmic; it reads HSLLRALKSDFARYNELNLDDDFQEDSGWKLNHGDVFRSPSQSLTLS. A helical transmembrane segment spans residues 371 to 391; that stretch reads ILVGSGVQLFLMVTCSIFFAA. At 392 to 405 the chain is on the lumenal side; sequence LGFLSPSSRGSLAT. The helical transmembrane segment at 406 to 426 threads the bilayer; the sequence is VMFILYALFGFVGSYTSMGIY. The Cytoplasmic segment spans residues 427–442; sequence KFFNGPYWKANLILTP. The helical transmembrane segment at 443-463 threads the bilayer; that stretch reads LLVPGAILLIIIALNFFLMFV. Topologically, residues 464–474 are lumenal; sequence HSSGVIPASTL. The chain crosses the membrane as a helical span at residues 475-495; it reads FFMVFLWFLFSIPLSFAGSLI. The Cytoplasmic portion of the chain corresponds to 496–527; sequence ARKRCHWDEHPTKTNQIARQIPFQPWYLKTIP. A helical transmembrane segment spans residues 528-548; it reads ATLIAGIFPFGSIAVELYFIY. At 549–560 the chain is on the lumenal side; that stretch reads TSLWFNKIFYMF. The helical transmembrane segment at 561–581 threads the bilayer; that stretch reads GFLFFSFLLLTLTSSLVTILI. Residues 582–596 are Cytoplasmic-facing; that stretch reads TYHSLCLENWKWQWR. Residues 597–617 form a helical membrane-spanning segment; the sequence is GFIIGGAGCALYVFIHSILFT. Over 618 to 635 the chain is Lumenal; the sequence is KFKLGGFTTIVLYVGYSS. A helical membrane pass occupies residues 636–656; sequence VISLLCCLVTGSIGFISSMLF. Topologically, residues 657–667 are cytoplasmic; sequence VRKIYSSIKVD.

It belongs to the nonaspanin (TM9SF) (TC 9.A.2) family.

It localises to the endosome membrane. Its subcellular location is the vacuole membrane. In terms of biological role, with TMN2 and TMN3, plays a critical role in the late stages of a nutrient-controlled pathway notably regulating FLO11 gene expression. Acts downstream of RAS2 and TOR. Essential for cell adhesion and filamentous growth. May play a role as effector of cellular copper homeostasis. The polypeptide is Transmembrane 9 superfamily member 1 (EMP70) (Saccharomyces cerevisiae (strain ATCC 204508 / S288c) (Baker's yeast)).